Consider the following 550-residue polypeptide: Mitochondrial distribution and morphology protein 12 (550 aa).

The 550-residue stretch at 1–550 (MSIDLNWETV…VYPSYWTFLV (550 aa)) folds into the SMP-LTD domain. Disordered regions lie at residues 76 to 97 (SDLA…DRRR), 196 to 386 (GHGH…KLRE), and 466 to 489 (ENEV…GGNG). Over residues 83-92 (GSEEDEEEIA) the composition is skewed to acidic residues. A compositionally biased stretch (pro residues) spans 270–286 (PPFPPSSTGGPSPPPGL). A compositionally biased stretch (basic residues) spans 288-305 (KPHHPHHPHHHHAHHAHP). Basic and acidic residues predominate over residues 327 to 344 (PTRDKTTPSHHPDPEDVH). The segment covering 346–355 (PNTTTTNKQR) has biased composition (polar residues). Over residues 356–371 (STSPATSSPLATSAQE) the composition is skewed to low complexity.

It belongs to the MDM12 family. As to quaternary structure, component of the ER-mitochondria encounter structure (ERMES) or MDM complex, composed of MMM1, MDM10, MDM12 and MDM34. An MMM1 homodimer associates with one molecule of MDM12 on each side in a pairwise head-to-tail manner, and the SMP-LTD domains of MMM1 and MDM12 generate a continuous hydrophobic tunnel for phospholipid trafficking.

The protein localises to the mitochondrion outer membrane. It is found in the endoplasmic reticulum membrane. Component of the ERMES/MDM complex, which serves as a molecular tether to connect the endoplasmic reticulum (ER) and mitochondria. Components of this complex are involved in the control of mitochondrial shape and protein biogenesis, and function in nonvesicular lipid trafficking between the ER and mitochondria. MDM12 is required for the interaction of the ER-resident membrane protein MMM1 and the outer mitochondrial membrane-resident beta-barrel protein MDM10. The MDM12-MMM1 subcomplex functions in the major beta-barrel assembly pathway that is responsible for biogenesis of all mitochondrial outer membrane beta-barrel proteins, and acts in a late step after the SAM complex. The MDM10-MDM12-MMM1 subcomplex further acts in the TOM40-specific pathway after the action of the MDM12-MMM1 complex. Essential for establishing and maintaining the structure of mitochondria and maintenance of mtDNA nucleoids. The polypeptide is Mitochondrial distribution and morphology protein 12 (Podospora anserina (strain S / ATCC MYA-4624 / DSM 980 / FGSC 10383) (Pleurage anserina)).